The sequence spans 59 residues: Single-pass membrane and coiled-coil domain-containing protein 4 (59 aa).

The tract at residues 1 to 23 is disordered; that stretch reads MRQLKGKPKKETSKDKKERKQAM. A compositionally biased stretch (basic and acidic residues) spans 9–22; sequence KKETSKDKKERKQA. A coiled-coil region spans residues 9–31; it reads KKETSKDKKERKQAMQEARQQIT. The chain crosses the membrane as a helical span at residues 32–52; the sequence is TVVLPTLAVVVALIVVFVYVA.

It belongs to the SMCO4 family.

The protein resides in the membrane. The chain is Single-pass membrane and coiled-coil domain-containing protein 4 (smco4) from Xenopus laevis (African clawed frog).